A 424-amino-acid chain; its full sequence is Envelope glycoprotein M (424 aa).

The Intravirion segment spans residues 1–23; that stretch reads MASRARMERNYRGLSHIDYVHKK. The chain crosses the membrane as a helical span at residues 24–44; it reads MWVVQAVCFGIAVLVFFGTLV. Residues 45-94 lie on the Virion surface side of the membrane; that stretch reads AASINLTEGFPCFFAAVVDYRTVNTTLVHTGLTYPRLGGVVPVLFFQTKA. Residues 95–115 traverse the membrane as a helical segment; the sequence is VVFFFYATSIVFVFLVCYITV. The Intravirion portion of the chain corresponds to 116–143; sequence GAIISSKKHVGAAYMGSGAFVFSLMASP. Residues 144–164 traverse the membrane as a helical segment; the sequence is LTILLGTVSIWLLQAVVIVLA. The Virion surface portion of the chain corresponds to 165 to 166; that stretch reads HK. The chain crosses the membrane as a helical span at residues 167–187; the sequence is LIVLAAAVYLVHFSTITFFYG. Over 188 to 226 the chain is Intravirion; that stretch reads YFCGRGVDSKVYAEDISSAKDIDGSLHKLIGNVRAMMVN. The chain crosses the membrane as a helical span at residues 227 to 247; that stretch reads LLSIVYSIILIMSSLMFGMLL. The Virion surface segment spans residues 248-261; the sequence is ANSFTLKFWHVIVT. The chain crosses the membrane as a helical span at residues 262-282; sequence VLITTSVLTLIYLLVIEFLIA. Residue Arg283 is a topological domain, intravirion. The chain crosses the membrane as a helical span at residues 284-304; sequence YVHIILGAYIGLLIGYGMLWT. Residues 305–327 lie on the Virion surface side of the membrane; the sequence is TTCDYVNRFYYAMGANASNLRIA. Residues 328 to 348 form a helical membrane-spanning segment; the sequence is CHSVLAVFTVLILLAMVVRLI. Residues 349 to 424 are Intravirion-facing; that stretch reads RASLYHRRRS…YSGSESEWDD (76 aa). The interval 382-424 is disordered; that stretch reads SYKQRGSQSEDERALTQSRSAEASDEDTIYDRVYSGSESEWDD.

This sequence belongs to the herpesviridae glycoprotein M family. As to quaternary structure, interacts (via N-terminus) with gN (via N-terminus). The gM-gN heterodimer forms the gCII complex.

It is found in the virion membrane. The protein resides in the host Golgi apparatus. Its subcellular location is the host trans-Golgi network. The protein localises to the host endosome membrane. It localises to the host nucleus inner membrane. Envelope glycoprotein important for virion assembly and egress. Plays a role in the correct incorporation of gH-gL into virion membrane. Directs the glycoprotein N (gN) to the host trans-Golgi network. The polypeptide is Envelope glycoprotein M (Gallid herpesvirus 2 (strain Chicken/Md5/ATCC VR-987) (GaHV-2)).